We begin with the raw amino-acid sequence, 1275 residues long: Surfactin synthase subunit 3 (1275 aa).

The Carrier domain occupies 968–1043 (GPRNEMEETI…GISAYLKNGG (76 aa)). At S1003 the chain carries O-(pantetheine 4'-phosphoryl)serine. The interval 1059–1271 (QIIFAFPPVL…ILLEFLNTQT (213 aa)) is thioesterase. Active-site residues include S1120, D1147, and H1247.

It belongs to the ATP-dependent AMP-binding enzyme family. Pantetheine 4'-phosphate is required as a cofactor.

Its pathway is antibiotic biosynthesis; surfactin biosynthesis. Functionally, probably activates a leucine. In Bacillus subtilis (strain 168), this protein is Surfactin synthase subunit 3 (srfAC).